The chain runs to 154 residues: Ribosome maturation factor RimP (154 aa).

This sequence belongs to the RimP family.

The protein resides in the cytoplasm. Its function is as follows. Required for maturation of 30S ribosomal subunits. The sequence is that of Ribosome maturation factor RimP from Desulforudis audaxviator (strain MP104C).